We begin with the raw amino-acid sequence, 252 residues long: Chitooligosaccharide deacetylase (252 aa).

Positions 61 and 125 each coordinate Mg(2+).

It belongs to the YdjC deacetylase family. ChbG subfamily. Homodimer. The cofactor is Mg(2+).

The protein resides in the cytoplasm. The catalysed reaction is N,N'-diacetylchitobiose + H2O = N-acetyl-beta-D-glucosaminyl-(1-&gt;4)-D-glucosamine + acetate. The enzyme catalyses diacetylchitobiose-6'-phosphate + H2O = N'-monoacetylchitobiose-6'-phosphate + acetate. It functions in the pathway glycan degradation; chitin degradation. In terms of biological role, involved in the degradation of chitin. ChbG is essential for growth on the acetylated chitooligosaccharides chitobiose and chitotriose but is dispensable for growth on cellobiose and chitosan dimer, the deacetylated form of chitobiose. Deacetylation of chitobiose-6-P and chitotriose-6-P is necessary for both the activation of the chb promoter by the regulatory protein ChbR and the hydrolysis of phosphorylated beta-glucosides by the phospho-beta-glucosidase ChbF. Catalyzes the removal of only one acetyl group from chitobiose-6-P to yield monoacetylchitobiose-6-P, the inducer of ChbR and the substrate of ChbF. The protein is Chitooligosaccharide deacetylase of Escherichia coli O6:K15:H31 (strain 536 / UPEC).